Consider the following 361-residue polypeptide: Peptide chain release factor 1 (361 aa).

Gln-237 carries the post-translational modification N5-methylglutamine. Residues 284–296 (EDEKRRSEEDSTR) are compositionally biased toward basic and acidic residues. The tract at residues 284–305 (EDEKRRSEEDSTRRNLVSSGDR) is disordered.

This sequence belongs to the prokaryotic/mitochondrial release factor family. Methylated by PrmC. Methylation increases the termination efficiency of RF1.

It is found in the cytoplasm. Its function is as follows. Peptide chain release factor 1 directs the termination of translation in response to the peptide chain termination codons UAG and UAA. This chain is Peptide chain release factor 1, found in Shewanella piezotolerans (strain WP3 / JCM 13877).